Reading from the N-terminus, the 323-residue chain is Acetyl-coenzyme A carboxylase carboxyl transferase subunit alpha (323 aa).

Residues 39–293 form the CoA carboxyltransferase C-terminal domain; the sequence is RLAGKSQQLT…KRSLAESLRQ (255 aa).

Belongs to the AccA family. Acetyl-CoA carboxylase is a heterohexamer composed of biotin carboxyl carrier protein (AccB), biotin carboxylase (AccC) and two subunits each of ACCase subunit alpha (AccA) and ACCase subunit beta (AccD).

It localises to the cytoplasm. The enzyme catalyses N(6)-carboxybiotinyl-L-lysyl-[protein] + acetyl-CoA = N(6)-biotinyl-L-lysyl-[protein] + malonyl-CoA. It functions in the pathway lipid metabolism; malonyl-CoA biosynthesis; malonyl-CoA from acetyl-CoA: step 1/1. Functionally, component of the acetyl coenzyme A carboxylase (ACC) complex. First, biotin carboxylase catalyzes the carboxylation of biotin on its carrier protein (BCCP) and then the CO(2) group is transferred by the carboxyltransferase to acetyl-CoA to form malonyl-CoA. This is Acetyl-coenzyme A carboxylase carboxyl transferase subunit alpha from Cupriavidus metallidurans (strain ATCC 43123 / DSM 2839 / NBRC 102507 / CH34) (Ralstonia metallidurans).